The sequence spans 353 residues: Photosystem II D2 protein (353 aa).

T2 carries the N-acetylthreonine modification. At T2 the chain carries Phosphothreonine. A helical transmembrane segment spans residues 41 to 61 (CAYFALGGWFTGTTFVTSWYT). H118 lines the chlorophyll a pocket. The chain crosses the membrane as a helical span at residues 125–141 (GFMLRQFELARSVQLRP). Pheophytin a is bound by residues Q130 and N143. The helical transmembrane segment at 153-166 (VFVSVFLIYPLGQS) threads the bilayer. H198 lines the chlorophyll a pocket. A helical transmembrane segment spans residues 208–228 (AALLCAIHGATVENTLFEDGD). A plastoquinone-binding residues include H215 and F262. H215 is a Fe cation binding site. Position 269 (H269) interacts with Fe cation. A helical transmembrane segment spans residues 279 to 295 (GLWMSALGVVGLALNLR).

It belongs to the reaction center PufL/M/PsbA/D family. In terms of assembly, PSII is composed of 1 copy each of membrane proteins PsbA, PsbB, PsbC, PsbD, PsbE, PsbF, PsbH, PsbI, PsbJ, PsbK, PsbL, PsbM, PsbT, PsbX, PsbY, PsbZ, Psb30/Ycf12, at least 3 peripheral proteins of the oxygen-evolving complex and a large number of cofactors. It forms dimeric complexes. The D1/D2 heterodimer binds P680, chlorophylls that are the primary electron donor of PSII, and subsequent electron acceptors. It shares a non-heme iron and each subunit binds pheophytin, quinone, additional chlorophylls, carotenoids and lipids. There is also a Cl(-1) ion associated with D1 and D2, which is required for oxygen evolution. The PSII complex binds additional chlorophylls, carotenoids and specific lipids. is required as a cofactor.

It localises to the plastid. The protein localises to the chloroplast thylakoid membrane. The catalysed reaction is 2 a plastoquinone + 4 hnu + 2 H2O = 2 a plastoquinol + O2. Functionally, photosystem II (PSII) is a light-driven water:plastoquinone oxidoreductase that uses light energy to abstract electrons from H(2)O, generating O(2) and a proton gradient subsequently used for ATP formation. It consists of a core antenna complex that captures photons, and an electron transfer chain that converts photonic excitation into a charge separation. The D1/D2 (PsbA/PsbD) reaction center heterodimer binds P680, the primary electron donor of PSII as well as several subsequent electron acceptors. D2 is needed for assembly of a stable PSII complex. The polypeptide is Photosystem II D2 protein (Barbarea verna (Land cress)).